We begin with the raw amino-acid sequence, 692 residues long: Formate hydrogenlyase transcriptional activator (692 aa).

Positions 202 to 344 (DIDELVSEVA…QIAERVAIAV (143 aa)) constitute a GAF domain. The Sigma-54 factor interaction domain maps to 381 to 610 (IIGRSEAMYN…LENVVERAVL (230 aa)). Residues 409-416 (GETGTGKE) and 472-481 (ADKSSLFLDE) contribute to the ATP site. The H-T-H motif DNA-binding region spans 663-682 (PKGAAQRLGLKRTTLLSRMK).

Functionally, required for induction of expression of the formate dehydrogenase H and hydrogenase-3 structural genes. The chain is Formate hydrogenlyase transcriptional activator (fhlA) from Salmonella typhimurium (strain LT2 / SGSC1412 / ATCC 700720).